Reading from the N-terminus, the 154-residue chain is Cysteine-rich DPF motif domain-containing protein 1 (154 aa).

This sequence belongs to the CDPF1 family.

This Drosophila melanogaster (Fruit fly) protein is Cysteine-rich DPF motif domain-containing protein 1.